The chain runs to 1070 residues: Potassium/chloride cotransporter 3 (1070 aa).

15 helical membrane-spanning segments follow: residues 92 to 112 (GVMLGVYLPTIQHILGVTMFI), 114 to 134 (LFWVVGMSGVAWTMALLAICC), 142 to 162 (ISLSAVATNGVVESGGAYFII), 174 to 194 (VGILFYLANTVAASMYIVGGV), 196 to 216 (VILMYLWPEMAIGGADALHDT), 228 to 248 (LYGTVFLLIQALIVAMGVKFV), 251 to 271 (LAPVSLMCVILAIAACIGGGI), 400 to 420 (FFMLMAIYFPAVTGIFTGTNM), 433 to 453 (VGTIAATLTTSAIYYILAILF), 473 to 493 (TMVVAALSWPHPAVVTVGAFL), 534 to 554 (PFLGLVLTVIIAECGILLGAV), 557 to 577 (IAEVLDFFFLMCYAFVNLIAV), 600 to 620 (LLGAALCFFIMFASSVPLACI), 791 to 811 (LVLFAEEIIHGAANDNCLIVT), and 827 to 847 (FIDIWWIVQDGGILMLIAYLL).

Expressed in the amphid sheath glia and the cephalic sheath glia. Also expressed in the inner labial and outer labial sheath and socket glia and as well as phasmid sheath glia.

It is found in the cell membrane. Its function is as follows. Probable potassium/chloride cotransporter that functions in the amphid sheath glial cells to regulate thermotaxis behavior. By maintaining chloride homeostasis, negatively regulates guanylate cyclase gcy-8 in the thermosensory AFD neurons and thereby controls the microvilli receptive ending morphology of the AFD neurons and thermotaxis. Modulates the temperature-evoked neuronal activity of the AFD neurons such as calcium responses to temperature gradients. Might also play a role in the chemotaxis behavior mediated by the sensory neurons AWA and AWC. The sequence is that of Potassium/chloride cotransporter 3 (kcc-3) from Caenorhabditis elegans.